The sequence spans 336 residues: Hdr-like menaquinol oxidoreductase cytochrome b-like subunit (336 aa).

Helical transmembrane passes span 4–24 (ALYI…IGTI), 60–80 (IDSP…VFLF), 102–122 (WLWL…IRHL), 145–165 (VAIV…LAFL), 184–204 (HLIL…RYII), and 232–252 (LHWL…YIPF).

Its subcellular location is the cell membrane. Its function is as follows. Has menaquinol-oxidizing activity. The HmeC and HmeD subunits may together mediate electron transfer from menaquinol to an unidentified electron acceptor on the cytoplasmic side of the membrane. In Archaeoglobus profundus (strain DSM 5631 / JCM 9629 / NBRC 100127 / Av18), this protein is Hdr-like menaquinol oxidoreductase cytochrome b-like subunit (hmeC).